Reading from the N-terminus, the 312-residue chain is Light-independent protochlorophyllide reductase iron-sulfur ATP-binding protein (312 aa).

ATP is bound by residues 55–60 (GIGKST) and Lys-84. Ser-59 contacts Mg(2+). Positions 140 and 174 each coordinate [4Fe-4S] cluster. ATP-binding positions include 225–226 (NR) and 249–251 (PDL).

Belongs to the NifH/BchL/ChlL family. In terms of assembly, homodimer. Protochlorophyllide reductase is composed of three subunits; BchL, BchN and BchB. [4Fe-4S] cluster is required as a cofactor.

It catalyses the reaction chlorophyllide a + oxidized 2[4Fe-4S]-[ferredoxin] + 2 ADP + 2 phosphate = protochlorophyllide a + reduced 2[4Fe-4S]-[ferredoxin] + 2 ATP + 2 H2O. Its pathway is porphyrin-containing compound metabolism; bacteriochlorophyll biosynthesis (light-independent). Functionally, component of the dark-operative protochlorophyllide reductase (DPOR) that uses Mg-ATP and reduced ferredoxin to reduce ring D of protochlorophyllide (Pchlide) to form chlorophyllide a (Chlide). This reaction is light-independent. The L component serves as a unique electron donor to the NB-component of the complex, and binds Mg-ATP. The protein is Light-independent protochlorophyllide reductase iron-sulfur ATP-binding protein of Rhodopseudomonas palustris (strain ATCC BAA-98 / CGA009).